A 347-amino-acid chain; its full sequence is Dihydroorotase (347 aa).

His-14 and His-16 together coordinate Zn(2+). Residues 16-18 and Asn-42 each bind substrate; that span reads HLR. The Zn(2+) site is built by Lys-100, His-137, and His-175. The residue at position 100 (Lys-100) is an N6-carboxylysine. Position 137 (His-137) interacts with substrate. Leu-220 provides a ligand contact to substrate. Asp-248 provides a ligand contact to Zn(2+). The active site involves Asp-248. His-252 and Ala-264 together coordinate substrate.

The protein belongs to the metallo-dependent hydrolases superfamily. DHOase family. Class II DHOase subfamily. As to quaternary structure, homodimer. Zn(2+) is required as a cofactor.

It catalyses the reaction (S)-dihydroorotate + H2O = N-carbamoyl-L-aspartate + H(+). It participates in pyrimidine metabolism; UMP biosynthesis via de novo pathway; (S)-dihydroorotate from bicarbonate: step 3/3. Its function is as follows. Catalyzes the reversible cyclization of carbamoyl aspartate to dihydroorotate. The sequence is that of Dihydroorotase from Jannaschia sp. (strain CCS1).